Consider the following 550-residue polypeptide: Sorting nexin-33 (550 aa).

The SH3 domain occupies 1 to 61 (MALKARALYS…PASYVEIQSS (61 aa)). Residues 62–152 (RSGSVQVDYS…QDSIASGKRG (91 aa)) form a disordered region. Residues 86–102 (YDDDDEEDDDDWDDWDD) show a composition bias toward acidic residues. A compositionally biased stretch (basic and acidic residues) spans 128 to 144 (SRPEYSHRPRPALERQD). In terms of domain architecture, PX spans 206–316 (FNCSVEEPTK…HFLGCQDEKQ (111 aa)). Residues 347 to 550 (LQDVEERVDV…EKTLHLYDEL (204 aa)) form the BAR domain.

It belongs to the sorting nexin family.

The protein localises to the cytoplasm. It is found in the cytosol. The protein resides in the membrane. Its subcellular location is the cytoplasmic vesicle membrane. Plays a role in the reorganization of the cytoskeleton, endocytosis and cellular vesicle trafficking, both during interphase and at the end of mitotic cell divisions. Required for efficient progress through mitosis and cytokinesis. Required for normal formation of the cleavage furrow at the end of mitosis. Modulates endocytosis of cell-surface proteins. Promotes membrane tubulation (in vitro). May promote the formation of macropinosomes. In Xenopus laevis (African clawed frog), this protein is Sorting nexin-33 (snx33).